Reading from the N-terminus, the 35-residue chain is Non-specific lipid-transfer protein 1 (35 aa).

Cys13 and Cys28 are disulfide-bonded.

As to expression, seeds.

Plant non-specific lipid-transfer proteins transfer phospholipids as well as galactolipids across membranes. May play a role in wax or cutin deposition in the cell walls of expanding epidermal cells and certain secretory tissues. Inhibits the growth of F.oxysporum and P.infestans. The sequence is that of Non-specific lipid-transfer protein 1 from Nigella sativa (Black cumin).